Here is a 453-residue protein sequence, read N- to C-terminus: tRNA modification GTPase MnmE (453 aa).

(6S)-5-formyl-5,6,7,8-tetrahydrofolate contacts are provided by R22, E79, and K119. A TrmE-type G domain is found at 215–376; it reads GMKVVIAGRP…LQQHLKSLMG (162 aa). N225 is a binding site for K(+). Residues 225–230, 244–250, 269–272, and 334–337 each bind GTP; these read NAGKSS, TEIAGTT, DTAG, and NKAD. S229 serves as a coordination point for Mg(2+). Positions 244, 246, and 249 each coordinate K(+). T250 is a binding site for Mg(2+). K453 provides a ligand contact to (6S)-5-formyl-5,6,7,8-tetrahydrofolate.

It belongs to the TRAFAC class TrmE-Era-EngA-EngB-Septin-like GTPase superfamily. TrmE GTPase family. In terms of assembly, homodimer. Heterotetramer of two MnmE and two MnmG subunits. Requires K(+) as cofactor.

It localises to the cytoplasm. Its function is as follows. Exhibits a very high intrinsic GTPase hydrolysis rate. Involved in the addition of a carboxymethylaminomethyl (cmnm) group at the wobble position (U34) of certain tRNAs, forming tRNA-cmnm(5)s(2)U34. In Shewanella sediminis (strain HAW-EB3), this protein is tRNA modification GTPase MnmE.